An 89-amino-acid chain; its full sequence is Small ribosomal subunit protein uS15 (89 aa).

Belongs to the universal ribosomal protein uS15 family. As to quaternary structure, part of the 30S ribosomal subunit. Forms a bridge to the 50S subunit in the 70S ribosome, contacting the 23S rRNA.

Its function is as follows. One of the primary rRNA binding proteins, it binds directly to 16S rRNA where it helps nucleate assembly of the platform of the 30S subunit by binding and bridging several RNA helices of the 16S rRNA. Forms an intersubunit bridge (bridge B4) with the 23S rRNA of the 50S subunit in the ribosome. The chain is Small ribosomal subunit protein uS15 from Paraburkholderia phymatum (strain DSM 17167 / CIP 108236 / LMG 21445 / STM815) (Burkholderia phymatum).